A 564-amino-acid polypeptide reads, in one-letter code: MASTSTTIRSHSSSRRGFSANSARLPGVSRSGFSSISVSRSRGSGGLGGACGGAGFGSRSLYGLGGSKRISIGGGSCAISGGYGSRAGGSYGFGGAGSGFGFGGGAGIGFGLGGGAGLAGGFGGPGFPVCPPGGIQEVTVNQSLLTPLNLQIDPAIQRVRAEEREQIKTLNNKFASFIDKVRFLEQQNKVLDTKWTLLQEQGTKTVRQNLEPLFEQYINNLRRQLDSIVGERGRLDSELRNMQDLVEDLKNKYEDEINKRTAAENEFVTLKKDVDAAYMNKVELQAKADTLTDEINFLRALYDAELSQMQTHISDTSVVLSMDNNRNLDLDSIIAEVKAQYEEIAQRSRAEAESWYQTKYEELQVTAGRHGDDLRNTKQEIAEINRMIQRLRSEIDHVKKQCASLQAAIADAEQRGEMALKDAKNKLEGLEDALQKAKQDLARLLKEYQELMNVKLALDVEIATYRKLLEGEECRLNGEGVGQVNVSVVQSTISSGYGGASGVGSGLGLGGGSSYSYGSGLGIGGGFSSSSGRAIGGGLSSVGGGSSTIKYTTTSSSSRKSYKH.

Over residues 1–11 the composition is skewed to low complexity; sequence MASTSTTIRSH. The disordered stretch occupies residues 1–23; that stretch reads MASTSTTIRSHSSSRRGFSANSA. An N-acetylalanine modification is found at A2. Residues 2-162 are head; the sequence is ASTSTTIRSH…DPAIQRVRAE (161 aa). S60 is modified (phosphoserine). The segment at 163–198 is coil 1A; the sequence is EREQIKTLNNKFASFIDKVRFLEQQNKVLDTKWTLL. One can recognise an IF rod domain in the interval 163–476; the sequence is EREQIKTLNN…KLLEGEECRL (314 aa). Residues 199–217 form a linker 1 region; that stretch reads QEQGTKTVRQNLEPLFEQY. The coil 1B stretch occupies residues 218 to 309; it reads INNLRRQLDS…ALYDAELSQM (92 aa). The tract at residues 310 to 333 is linker 12; that stretch reads QTHISDTSVVLSMDNNRNLDLDSI. The coil 2 stretch occupies residues 334-472; that stretch reads IAEVKAQYEE…ATYRKLLEGE (139 aa). Positions 473–564 are tail; sequence ECRLNGEGVG…SSSSRKSYKH (92 aa).

The protein belongs to the intermediate filament family. In terms of assembly, heterodimer of a type I and a type II keratin. KRT6 isomers associate with KRT16 and/or KRT17. In terms of tissue distribution, constitutively expressed in distinct types of epithelia such as those in oral mucosa, esophagus, papillae of tongue and hair follicle outer root sheath.

The protein is Keratin, type II cytoskeletal 6C (KRT6C) of Homo sapiens (Human).